Here is a 54-residue protein sequence, read N- to C-terminus: IATVDCSDYPKPVCTLEDMPLCGSDNITYHNKCYFCNAVAHSNGTLTFSHFGKC.

A Kazal-like domain is found at 4 to 54; that stretch reads VDCSDYPKPVCTLEDMPLCGSDNITYHNKCYFCNAVAHSNGTLTFSHFGKC. Intrachain disulfides connect Cys6-Cys36, Cys14-Cys33, and Cys22-Cys54. N-linked (GlcNAc...) asparagine glycosylation occurs at Asn43.

Its subcellular location is the secreted. The chain is Ovomucoid from Carpococcyx renauldi (Coral-billed ground-cuckoo).